The primary structure comprises 517 residues: Perilipin-1 (517 aa).

At serine 81 the chain carries Phosphoserine. Residue threonine 85 is modified to Phosphothreonine. 5 positions are modified to phosphoserine: serine 126, serine 130, serine 132, serine 137, and serine 174. The tract at residues 195–216 (DKESAPSSGRQRTQKAPKAKPS) is disordered. Residues threonine 223, threonine 298, and threonine 300 each carry the phosphothreonine modification. Positions 286 to 320 (LAASQDESHDDQTDTEGEETDDEEEEEESEAEENV) are disordered. The tract at residues 290–321 (QDESHDDQTDTEGEETDDEEEEEESEAEENVL) is required for interaction with CIDEC. The segment covering 298–318 (TDTEGEETDDEEEEEESEAEE) has biased composition (acidic residues). A phosphoserine mark is found at serine 314, serine 384, serine 386, serine 410, serine 433, serine 439, serine 460, serine 492, and serine 494. Residues 425–490 (SAEAERKGSG…AMPREKPARR (66 aa)) form a disordered region.

This sequence belongs to the perilipin family. As to quaternary structure, interacts with ABHD5. Interacts with CIDEC. Interacts with AQP7. Post-translationally, major cAMP-dependent protein kinase-substrate in adipocytes, also dephosphorylated by PP1. When phosphorylated, may be maximally sensitive to HSL and when unphosphorylated, may play a role in the inhibition of lipolysis, by acting as a barrier in lipid droplet.

The protein resides in the endoplasmic reticulum. It localises to the lipid droplet. In terms of biological role, modulator of adipocyte lipid metabolism. Coats lipid storage droplets to protect them from breakdown by hormone-sensitive lipase (HSL). Its absence may result in leanness. Plays a role in unilocular lipid droplet formation by activating CIDEC. Their interaction promotes lipid droplet enlargement and directional net neutral lipid transfer. May modulate lipolysis and triglyceride levels. The protein is Perilipin-1 (Plin1) of Mus musculus (Mouse).